The sequence spans 421 residues: Inhibitor of growth protein 3 (421 aa).

Residues 129 to 164 are disordered; that stretch reads PSQPVNNHHAHSHTPVEKRKYNPTSHHTATDHIPEK. Glycyl lysine isopeptide (Lys-Gly) (interchain with G-Cter in SUMO2) cross-links involve residues lysine 148, lysine 165, and lysine 167. Lysine 181 is modified (N6-acetyllysine). A Glycyl lysine isopeptide (Lys-Gly) (interchain with G-Cter in SUMO2) cross-link involves residue lysine 256. The residue at position 264 (lysine 264) is an N6-acetyllysine. The interval 286–324 is disordered; the sequence is TQNASSSAADSRSGRKSKNNTKSSSQQSSSSSSSSSSSS. A compositionally biased stretch (low complexity) spans 308–324; the sequence is SSSQQSSSSSSSSSSSS. The PHD-type zinc-finger motif lies at 363–412; sequence PRYCICNQVSYGEMVGCDNQDCPIEWFHYGCVGLTEAPKGKWFCPQCTAA. Zn(2+) is bound by residues cysteine 366, cysteine 368, cysteine 379, cysteine 384, histidine 390, cysteine 393, cysteine 406, and cysteine 409.

It belongs to the ING family. As to quaternary structure, interacts with H3K4me3 and to a lesser extent with H3K4me2. Component of the NuA4 histone acetyltransferase complex which contains the catalytic subunit KAT5/TIP60 and the subunits EP400, TRRAP/PAF400, BRD8/SMAP, EPC1, DMAP1/DNMAP1, RUVBL1/TIP49, RUVBL2, ING3, actin, ACTL6A/BAF53A, MORF4L1/MRG15, MORF4L2/MRGX, MRGBP, YEATS4/GAS41, VPS72/YL1 and MEAF6. The NuA4 complex interacts with MYC. HTATTIP/TIP60, EPC1, and ING3 together constitute a minimal HAT complex termed Piccolo NuA4. Component of a SWR1-like complex.

It localises to the nucleus. Component of the NuA4 histone acetyltransferase (HAT) complex which is involved in transcriptional activation of select genes principally by acetylation of nucleosomal histones H4 and H2A. This modification may both alter nucleosome - DNA interactions and promote interaction of the modified histones with other proteins which positively regulate transcription. This complex may be required for the activation of transcriptional programs associated with oncogene and proto-oncogene mediated growth induction, tumor suppressor mediated growth arrest and replicative senescence, apoptosis, and DNA repair. NuA4 may also play a direct role in DNA repair when directly recruited to sites of DNA damage. Component of a SWR1-like complex that specifically mediates the removal of histone H2A.Z/H2AZ1 from the nucleosome. This Rattus norvegicus (Rat) protein is Inhibitor of growth protein 3 (Ing3).